Consider the following 143-residue polypeptide: ATP synthase epsilon chain (143 aa).

Belongs to the ATPase epsilon chain family. As to quaternary structure, F-type ATPases have 2 components, CF(1) - the catalytic core - and CF(0) - the membrane proton channel. CF(1) has five subunits: alpha(3), beta(3), gamma(1), delta(1), epsilon(1). CF(0) has three main subunits: a, b and c.

The protein localises to the cell inner membrane. Functionally, produces ATP from ADP in the presence of a proton gradient across the membrane. This Dichelobacter nodosus (strain VCS1703A) protein is ATP synthase epsilon chain.